We begin with the raw amino-acid sequence, 152 residues long: Arginine repressor (152 aa).

It belongs to the ArgR family.

It is found in the cytoplasm. It functions in the pathway amino-acid biosynthesis; L-arginine biosynthesis [regulation]. Functionally, regulates arginine biosynthesis genes. This chain is Arginine repressor, found in Caldicellulosiruptor saccharolyticus (strain ATCC 43494 / DSM 8903 / Tp8T 6331).